The chain runs to 71 residues: Large ribosomal subunit protein bL31 (71 aa).

The Zn(2+) site is built by Cys-16, Cys-18, Cys-38, and Cys-41.

This sequence belongs to the bacterial ribosomal protein bL31 family. Type A subfamily. Part of the 50S ribosomal subunit. Requires Zn(2+) as cofactor.

In terms of biological role, binds the 23S rRNA. This Neisseria gonorrhoeae (strain ATCC 700825 / FA 1090) protein is Large ribosomal subunit protein bL31.